Here is a 620-residue protein sequence, read N- to C-terminus: 1-deoxy-D-xylulose-5-phosphate synthase (620 aa).

Thiamine diphosphate is bound by residues H80 and 121 to 123 (GHS). D152 lines the Mg(2+) pocket. Thiamine diphosphate is bound by residues 153-154 (GA), N181, Y288, and E370. N181 is a Mg(2+) binding site.

This sequence belongs to the transketolase family. DXPS subfamily. Homodimer. It depends on Mg(2+) as a cofactor. Requires thiamine diphosphate as cofactor.

It catalyses the reaction D-glyceraldehyde 3-phosphate + pyruvate + H(+) = 1-deoxy-D-xylulose 5-phosphate + CO2. Its pathway is metabolic intermediate biosynthesis; 1-deoxy-D-xylulose 5-phosphate biosynthesis; 1-deoxy-D-xylulose 5-phosphate from D-glyceraldehyde 3-phosphate and pyruvate: step 1/1. In terms of biological role, catalyzes the acyloin condensation reaction between C atoms 2 and 3 of pyruvate and glyceraldehyde 3-phosphate to yield 1-deoxy-D-xylulose-5-phosphate (DXP). The chain is 1-deoxy-D-xylulose-5-phosphate synthase from Escherichia coli O6:K15:H31 (strain 536 / UPEC).